The following is a 300-amino-acid chain: Protein TRACHEARY ELEMENT DIFFERENTIATION-RELATED 7A (300 aa).

The disordered stretch occupies residues M1–P181. Residues M1–T187 lie on the Extracellular side of the membrane. Positions H12–P181 are enriched in pro residues. N183 carries N-linked (GlcNAc...) asparagine glycosylation. A helical transmembrane segment spans residues I188–L208. Topologically, residues W209 to G300 are cytoplasmic.

Accumulates in cells differentiating into tracheary element (TE) which undergo secondary cell wall (SCW) formation.

The protein localises to the cell membrane. The protein resides in the secreted. It localises to the cell wall. Its function is as follows. Involved in the secondary cell wall (SCW) formation of vessel elements (e.g. protoxylem and metaxylem), thus promoting tracheary element (TE) differentiation. This Zinnia elegans (Garden zinnia) protein is Protein TRACHEARY ELEMENT DIFFERENTIATION-RELATED 7A.